The chain runs to 151 residues: Prolamin PPROL 14P (151 aa).

The N-terminal stretch at 1–19 is a signal peptide; the sequence is MKIIFVFALLAIAACSATA. Pyrrolidone carboxylic acid is present on Gln-20.

Belongs to the prolamin family.

Its subcellular location is the vacuole. The protein resides in the aleurone grain. Functionally, seed storage protein; serves as a source of nitrogen, carbon and sulfur for the young developing seedling. The polypeptide is Prolamin PPROL 14P (PROLM20) (Oryza sativa subsp. japonica (Rice)).